A 381-amino-acid polypeptide reads, in one-letter code: Pulmonary surfactant-associated protein B (381 aa).

The first 24 residues, 1 to 24 (MAESHLLQWLLLLLPTLCGPGTAA), serve as a signal peptide directing secretion. A Saposin A-type domain is found at 25–65 (WTTSSLACAQGPEFWCQSLEQALQCRALGHCLQEVWGHVGA). A propeptide spanning residues 25-200 (WTTSSLACAQ…PHTQDLSEQQ (176 aa)) is cleaved from the precursor. 3 Saposin B-type domains span residues 65–147 (ADDL…KSRQ), 204–281 (PLPY…SMDD), and 295–370 (RDSE…GTMS). Disulfide bonds link Cys-69–Cys-143, Cys-72–Cys-137, Cys-100–Cys-112, Cys-208–Cys-277, Cys-211–Cys-271, Cys-235–Cys-246, Cys-299–Cys-366, Cys-302–Cys-360, and Cys-325–Cys-335. An N-linked (GlcNAc...) asparagine glycan is attached at Asn-129. The propeptide occupies 280–381 (DDSAGPRSPT…PLQCIHSPDL (102 aa)). Asn-311 carries N-linked (GlcNAc...) asparagine glycosylation.

In terms of assembly, homodimer; disulfide-linked.

It localises to the secreted. The protein localises to the extracellular space. The protein resides in the surface film. Its function is as follows. Pulmonary surfactant-associated proteins promote alveolar stability by lowering the surface tension at the air-liquid interface in the peripheral air spaces. SP-B increases the collapse pressure of palmitic acid to nearly 70 millinewtons per meter. In Homo sapiens (Human), this protein is Pulmonary surfactant-associated protein B (SFTPB).